The primary structure comprises 516 residues: Probable inorganic phosphate transporter 1-6 (516 aa).

A2 is subject to N-acetylalanine. The Cytoplasmic segment spans residues A2 to A25. The helical transmembrane segment at V26 to I46 threads the bilayer. Topologically, residues T47–S71 are extracellular. The helical transmembrane segment at A72 to L92 threads the bilayer. Residues G93–R100 lie on the Cytoplasmic side of the membrane. The helical transmembrane segment at V101 to G121 threads the bilayer. Over R122 to C132 the chain is Extracellular. A helical transmembrane segment spans residues F133–M153. Residues S154 to R162 lie on the Cytoplasmic side of the membrane. Residues G163 to V183 traverse the membrane as a helical segment. The Extracellular segment spans residues S184 to A212. The helical transmembrane segment at D213–W233 threads the bilayer. Residues R234–R293 are Cytoplasmic-facing. Residues H294 to S314 traverse the membrane as a helical segment. At Q315–T349 the chain is on the extracellular side. The chain crosses the membrane as a helical span at residues I350–M370. At G371 to K374 the chain is on the cytoplasmic side. A helical membrane pass occupies residues I375 to H395. Residues H396 to R403 are Extracellular-facing. A helical transmembrane segment spans residues I404–T424. At T425–H442 the chain is on the cytoplasmic side. A helical transmembrane segment spans residues G443 to L463. Topologically, residues V464–N471 are extracellular. The chain crosses the membrane as a helical span at residues T472 to E492. Residues T493–V516 are Cytoplasmic-facing.

This sequence belongs to the major facilitator superfamily. Phosphate:H(+) symporter (TC 2.A.1.9) family. In terms of tissue distribution, expressed in anthers, tapetumand mature pollen and, to a lower extent, in hydathodes and vascular tissues of cotyledons of flowering plants.

It is found in the membrane. High-affinity transporter for external inorganic phosphate. This is Probable inorganic phosphate transporter 1-6 (PHT1-6) from Arabidopsis thaliana (Mouse-ear cress).